The chain runs to 625 residues: Endo-1,4-beta-xylanase A (625 aa).

An N-terminal signal peptide occupies residues 1–19 (MKLFQIFPLLLSLTSVTLA). Residues 35–231 (VSTGHDVKKI…TGGGCSGSVE (197 aa)) enclose the GH11 1 domain. Residues 245–283 (DGKSKGGSSSGGSNGQGLGNGQGNGQGQGNGQGQSATGS) are disordered. The segment covering 252 to 276 (SSSGGSNGQGLGNGQGNGQGQGNGQ) has biased composition (gly residues). Positions 255-279 (GGSNGQGLGNGQGNGQGQGNGQGQS) are linker. Tandem repeats lie at residues 259–268 (GQGLGNGQGN) and 269–278 (GQGQGNGQGQ). A 2 X 10 AA tandem repeats of G-Q-G-[LQ]-G-N-G-Q-G-[NQ] region spans residues 259-278 (GQGLGNGQGNGQGQGNGQGQ). CBM10 domains follow at residues 285–324 (KCPS…CGCG) and 332–371 (NCPS…CGCG). The tract at residues 374–403 (NTTPTTTTKKSNNSQPTQGQSNNNSSTNTN) is linker. The interval 379-399 (TTTKKSNNSQPTQGQSNNNSS) is disordered. The 202-residue stretch at 416–617 (TETSNKVGSI…GSGTSGTADF (202 aa)) folds into the GH11 2 domain. Catalysis depends on E510, which acts as the Nucleophile. The Proton donor role is filled by E603.

This sequence belongs to the glycosyl hydrolase 11 (cellulase G) family.

It catalyses the reaction Endohydrolysis of (1-&gt;4)-beta-D-xylosidic linkages in xylans.. The protein operates within glycan degradation; xylan degradation. Hydrolyzes 1,4-beta linked polysaccharide backbones of xylans, one of the major hemicellulose components in hardwoods and softwoods. It is more active against xylopentaose than xylotetraose, has trace activity against xylotriose. The major products released from hydrolysis of xylooligosaccharides are xylobiose and xylotriose. The reiterated 40 AA domain is involved in binding the cellulase-hemicellulase complex. In Piromyces sp, this protein is Endo-1,4-beta-xylanase A (XYNA).